A 144-amino-acid polypeptide reads, in one-letter code: Ig heavy chain V region M167 (144 aa).

A signal peptide spans 1–19; that stretch reads MKMWLNWVFLLTLLHGIQC. The Ig-like domain maps to 20-133; that stretch reads EVKVVESGGG…GNSYFGYFDV (114 aa).

In Mus musculus (Mouse), this protein is Ig heavy chain V region M167.